The following is a 952-amino-acid chain: Glycine dehydrogenase (decarboxylating) (952 aa).

The residue at position 696 (Lys-696) is an N6-(pyridoxal phosphate)lysine.

This sequence belongs to the GcvP family. As to quaternary structure, the glycine cleavage system is composed of four proteins: P, T, L and H. Pyridoxal 5'-phosphate serves as cofactor.

The catalysed reaction is N(6)-[(R)-lipoyl]-L-lysyl-[glycine-cleavage complex H protein] + glycine + H(+) = N(6)-[(R)-S(8)-aminomethyldihydrolipoyl]-L-lysyl-[glycine-cleavage complex H protein] + CO2. The glycine cleavage system catalyzes the degradation of glycine. The P protein binds the alpha-amino group of glycine through its pyridoxal phosphate cofactor; CO(2) is released and the remaining methylamine moiety is then transferred to the lipoamide cofactor of the H protein. In Pelagibacter ubique (strain HTCC1062), this protein is Glycine dehydrogenase (decarboxylating).